We begin with the raw amino-acid sequence, 142 residues long: Acidic phospholipase A2 PA4 (142 aa).

Residues Trp-10, Gly-12, and Gly-14 each contribute to the Ca(2+) site. Disulfide bonds link Cys-11–Cys-33, Cys-32–Cys-72, and Cys-39–Cys-65. Residue His-36 is part of the active site. Position 37 (Asp-37) interacts with Ca(2+).

Belongs to the phospholipase A2 family. Group III subfamily. It depends on Ca(2+) as a cofactor. Expressed by the venom gland.

It is found in the secreted. The enzyme catalyses a 1,2-diacyl-sn-glycero-3-phosphocholine + H2O = a 1-acyl-sn-glycero-3-phosphocholine + a fatty acid + H(+). PLA2 catalyzes the calcium-dependent hydrolysis of the 2-acyl groups in 3-sn-phosphoglycerides. The protein is Acidic phospholipase A2 PA4 of Heloderma suspectum (Gila monster).